A 271-amino-acid chain; its full sequence is Putative carboxymethylenebutenolidase (271 aa).

Active-site residues include Cys147, Asp204, and His236.

Belongs to the dienelactone hydrolase family.

It catalyses the reaction 2-(5-oxo-2,5-dihydrofuran-2-ylidene)acetate + H2O = 4-oxohex-2-enedioate + H(+). The protein is Putative carboxymethylenebutenolidase (ysgA) of Escherichia coli O157:H7.